The following is a 266-amino-acid chain: Mediator of RNA polymerase II transcription subunit 18 (266 aa).

It belongs to the Mediator complex subunit 18 family. In terms of assembly, component of the Mediator complex.

It localises to the nucleus. Its function is as follows. Component of the Mediator complex, a coactivator involved in the regulated transcription of nearly all RNA polymerase II-dependent genes. Mediator functions as a bridge to convey information from gene-specific regulatory proteins to the basal RNA polymerase II transcription machinery. Mediator is recruited to promoters by direct interactions with regulatory proteins and serves as a scaffold for the assembly of a functional preinitiation complex with RNA polymerase II and the general transcription factors. In Candida glabrata (strain ATCC 2001 / BCRC 20586 / JCM 3761 / NBRC 0622 / NRRL Y-65 / CBS 138) (Yeast), this protein is Mediator of RNA polymerase II transcription subunit 18 (SRB5).